A 1200-amino-acid chain; its full sequence is ATP-dependent helicase/deoxyribonuclease subunit B (1200 aa).

The protein belongs to the helicase family. AddB/RexB type 2 subfamily. As to quaternary structure, heterodimer of AddA and RexB. Mg(2+) serves as cofactor.

In terms of biological role, the heterodimer acts as both an ATP-dependent DNA helicase and an ATP-dependent, dual-direction single-stranded exonuclease. Recognizes the chi site generating a DNA molecule suitable for the initiation of homologous recombination. This subunit has 5' -&gt; 3' nuclease activity but not helicase activity. This is ATP-dependent helicase/deoxyribonuclease subunit B from Lactiplantibacillus plantarum (strain ATCC BAA-793 / NCIMB 8826 / WCFS1) (Lactobacillus plantarum).